A 406-amino-acid polypeptide reads, in one-letter code: S-adenosylmethionine synthase (406 aa).

Residue H17 participates in ATP binding. D19 contacts Mg(2+). E45 is a binding site for K(+). E58 and Q101 together coordinate L-methionine. The tract at residues 101-111 is flexible loop; sequence QSAEINQGVAR. ATP contacts are provided by residues 178–180, D258, 264–265, A281, and K285; these read DGK and RK. An L-methionine-binding site is contributed by D258. K289 is a binding site for L-methionine.

The protein belongs to the AdoMet synthase family. In terms of assembly, homotetramer; dimer of dimers. Mg(2+) serves as cofactor. Requires K(+) as cofactor.

It localises to the cytoplasm. The enzyme catalyses L-methionine + ATP + H2O = S-adenosyl-L-methionine + phosphate + diphosphate. It participates in amino-acid biosynthesis; S-adenosyl-L-methionine biosynthesis; S-adenosyl-L-methionine from L-methionine: step 1/1. Catalyzes the formation of S-adenosylmethionine (AdoMet) from methionine and ATP. The overall synthetic reaction is composed of two sequential steps, AdoMet formation and the subsequent tripolyphosphate hydrolysis which occurs prior to release of AdoMet from the enzyme. This is S-adenosylmethionine synthase from Bifidobacterium longum subsp. infantis (strain ATCC 15697 / DSM 20088 / JCM 1222 / NCTC 11817 / S12).